The primary structure comprises 279 residues: Release factor glutamine methyltransferase (279 aa).

S-adenosyl-L-methionine is bound by residues aspartate 139 and asparagine 182. Position 182-185 (182-185 (NPPY)) interacts with substrate.

Belongs to the protein N5-glutamine methyltransferase family. PrmC subfamily.

It catalyses the reaction L-glutaminyl-[peptide chain release factor] + S-adenosyl-L-methionine = N(5)-methyl-L-glutaminyl-[peptide chain release factor] + S-adenosyl-L-homocysteine + H(+). Its function is as follows. Methylates the class 1 translation termination release factors RF1/PrfA and RF2/PrfB on the glutamine residue of the universally conserved GGQ motif. This chain is Release factor glutamine methyltransferase, found in Thermodesulfovibrio yellowstonii (strain ATCC 51303 / DSM 11347 / YP87).